The chain runs to 87 residues: Translation initiation factor IF-1 (87 aa).

The 72-residue stretch at 16–87 (LSKEDVIEME…TKGRISYRHK (72 aa)) folds into the S1-like domain.

Belongs to the IF-1 family. Component of the 30S ribosomal translation pre-initiation complex which assembles on the 30S ribosome in the order IF-2 and IF-3, IF-1 and N-formylmethionyl-tRNA(fMet); mRNA recruitment can occur at any time during PIC assembly.

It is found in the cytoplasm. One of the essential components for the initiation of protein synthesis. Stabilizes the binding of IF-2 and IF-3 on the 30S subunit to which N-formylmethionyl-tRNA(fMet) subsequently binds. Helps modulate mRNA selection, yielding the 30S pre-initiation complex (PIC). Upon addition of the 50S ribosomal subunit IF-1, IF-2 and IF-3 are released leaving the mature 70S translation initiation complex. This Magnetococcus marinus (strain ATCC BAA-1437 / JCM 17883 / MC-1) protein is Translation initiation factor IF-1.